A 678-amino-acid polypeptide reads, in one-letter code: Endoplasmic reticulum membrane-associated RNA degradation protein (678 aa).

Helical transmembrane passes span 390 to 410 (LLAFSLVLLLRFVDDCLLSVF) and 587 to 607 (VLSLILLLIALELVNIHAVCG).

The protein resides in the endoplasmic reticulum membrane. In terms of biological role, may play a role in neuronal migration during embryonic development. This is Endoplasmic reticulum membrane-associated RNA degradation protein (ERMARD) from Homo sapiens (Human).